We begin with the raw amino-acid sequence, 284 residues long: Bifunctional protein FolD 1 (284 aa).

NADP(+)-binding positions include 166–168 and I232; that span reads GAS.

This sequence belongs to the tetrahydrofolate dehydrogenase/cyclohydrolase family. In terms of assembly, homodimer.

The enzyme catalyses (6R)-5,10-methylene-5,6,7,8-tetrahydrofolate + NADP(+) = (6R)-5,10-methenyltetrahydrofolate + NADPH. The catalysed reaction is (6R)-5,10-methenyltetrahydrofolate + H2O = (6R)-10-formyltetrahydrofolate + H(+). It functions in the pathway one-carbon metabolism; tetrahydrofolate interconversion. Its function is as follows. Catalyzes the oxidation of 5,10-methylenetetrahydrofolate to 5,10-methenyltetrahydrofolate and then the hydrolysis of 5,10-methenyltetrahydrofolate to 10-formyltetrahydrofolate. The chain is Bifunctional protein FolD 1 from Pseudomonas syringae pv. syringae (strain B728a).